The primary structure comprises 427 residues: Enolase (427 aa).

Gln163 lines the (2R)-2-phosphoglycerate pocket. The Proton donor role is filled by Glu205. Mg(2+) is bound by residues Asp242, Glu285, and Asp312. Residues Lys337, Arg366, Ser367, and Lys388 each contribute to the (2R)-2-phosphoglycerate site. Lys337 acts as the Proton acceptor in catalysis.

The protein belongs to the enolase family. The cofactor is Mg(2+).

It is found in the cytoplasm. The protein localises to the secreted. Its subcellular location is the cell surface. It carries out the reaction (2R)-2-phosphoglycerate = phosphoenolpyruvate + H2O. It participates in carbohydrate degradation; glycolysis; pyruvate from D-glyceraldehyde 3-phosphate: step 4/5. Its function is as follows. Catalyzes the reversible conversion of 2-phosphoglycerate (2-PG) into phosphoenolpyruvate (PEP). It is essential for the degradation of carbohydrates via glycolysis. The protein is Enolase of Paraburkholderia phytofirmans (strain DSM 17436 / LMG 22146 / PsJN) (Burkholderia phytofirmans).